The sequence spans 575 residues: MMSWKFGKKFKEGGFLSGKHHSSNNNSPSDTSRSTTPTPGNPHPEDAVKPPVPRSGMLKIRVTAAKGLSLPQGVSVPAPVQEALTTHPTLASRIATSPPTAIVKAAGANRDSLQRRQVWWLPYLVLEFDKNEVLVDALGGDLASPVWMYSATFDVSRISEISATVYLRTREPHAEGREKSNGEGEGEDMGNSDLCLGSIRFTPNLDSLRVTDDWVTVQGGGGSGSINVQVSFKPASGQILTIDSFELLKVIGKGSFGKVMQVRKRDTLRIYALKTIRKAHIVSRSEVTHTLAERTVLAQVNCPFIVPLKFSFQSKEKLYLVLAFINGGELFHHLQREGKFNETRSRFYSAQLLLALEHLHSFNVIYRDLKPENILLDYAGNIALCDFGLCKLNMSNSDTTNTFCGTPEYLAPELLSGHGYTKCVDWWTLGVLLYEMLTGLPPFYDENTNEMYRKILTEPLRFPDGVRSEARSLLTGLLNRDPRQRLGVNGAQDIKNHPFFAKHINFTKLWNKQIQPPFKPAVASAIDTSNFDEEFTNEVPLDSVVDDSHLSQTVQQQFEGFSWSVSPLGESVGRY.

The interval Met-1 to Pro-53 is disordered. The span at Ser-23 to Thr-38 shows a compositional bias: low complexity. A Protein kinase domain is found at Phe-245 to Phe-500. Residues Ile-251 to Val-259 and Lys-274 each bind ATP. Asp-368 serves as the catalytic Proton acceptor. The region spanning Lys-502–Gly-573 is the AGC-kinase C-terminal domain. Ser-543 and Ser-562 each carry phosphoserine.

The protein belongs to the protein kinase superfamily. AGC Ser/Thr protein kinase family. RAC subfamily.

It catalyses the reaction L-seryl-[protein] + ATP = O-phospho-L-seryl-[protein] + ADP + H(+). The enzyme catalyses L-threonyl-[protein] + ATP = O-phospho-L-threonyl-[protein] + ADP + H(+). Functionally, probable serine/threonine-protein kinase which may act in the sphingolipid-mediated signaling pathway. May act downstream of TORC2 (TOR complex 2) and PDK1 to regulate sphingolipid metabolism. This Cryptococcus neoformans var. grubii serotype A (strain H99 / ATCC 208821 / CBS 10515 / FGSC 9487) (Filobasidiella neoformans var. grubii) protein is Serine/threonine-protein kinase YPK1.